Reading from the N-terminus, the 415-residue chain is Serine hydroxymethyltransferase (415 aa).

(6S)-5,6,7,8-tetrahydrofolate contacts are provided by residues Leu-117 and 121-123 (GHL). Residue Lys-226 is modified to N6-(pyridoxal phosphate)lysine.

It belongs to the SHMT family. As to quaternary structure, homodimer. Requires pyridoxal 5'-phosphate as cofactor.

The protein resides in the cytoplasm. The catalysed reaction is (6R)-5,10-methylene-5,6,7,8-tetrahydrofolate + glycine + H2O = (6S)-5,6,7,8-tetrahydrofolate + L-serine. It functions in the pathway one-carbon metabolism; tetrahydrofolate interconversion. It participates in amino-acid biosynthesis; glycine biosynthesis; glycine from L-serine: step 1/1. Functionally, catalyzes the reversible interconversion of serine and glycine with tetrahydrofolate (THF) serving as the one-carbon carrier. This reaction serves as the major source of one-carbon groups required for the biosynthesis of purines, thymidylate, methionine, and other important biomolecules. Also exhibits THF-independent aldolase activity toward beta-hydroxyamino acids, producing glycine and aldehydes, via a retro-aldol mechanism. The polypeptide is Serine hydroxymethyltransferase (Leptospira interrogans serogroup Icterohaemorrhagiae serovar copenhageni (strain Fiocruz L1-130)).